The sequence spans 250 residues: Coproheme decarboxylase (250 aa).

Fe-coproporphyrin III is bound by residues R131, 145–149 (YPMNK), H172, and Q185. The active site involves Y145.

This sequence belongs to the ChdC family. Type 1 subfamily. The cofactor is Fe-coproporphyrin III.

The catalysed reaction is Fe-coproporphyrin III + 2 H2O2 + 2 H(+) = heme b + 2 CO2 + 4 H2O. It carries out the reaction Fe-coproporphyrin III + H2O2 + H(+) = harderoheme III + CO2 + 2 H2O. It catalyses the reaction harderoheme III + H2O2 + H(+) = heme b + CO2 + 2 H2O. It functions in the pathway porphyrin-containing compound metabolism; protoheme biosynthesis. Its function is as follows. Involved in coproporphyrin-dependent heme b biosynthesis. Catalyzes the decarboxylation of Fe-coproporphyrin III (coproheme) to heme b (protoheme IX), the last step of the pathway. The reaction occurs in a stepwise manner with a three-propionate intermediate. This is Coproheme decarboxylase from Staphylococcus aureus (strain MRSA252).